Consider the following 101-residue polypeptide: Small ribosomal subunit protein uS14 (101 aa).

The protein belongs to the universal ribosomal protein uS14 family. In terms of assembly, part of the 30S ribosomal subunit. Contacts proteins S3 and S10.

In terms of biological role, binds 16S rRNA, required for the assembly of 30S particles and may also be responsible for determining the conformation of the 16S rRNA at the A site. In Haemophilus influenzae (strain PittGG), this protein is Small ribosomal subunit protein uS14.